The primary structure comprises 264 residues: Tryptophan synthase alpha chain (264 aa).

Residues Glu-49 and Asp-60 each act as proton acceptor in the active site.

Belongs to the TrpA family. In terms of assembly, tetramer of two alpha and two beta chains.

It carries out the reaction (1S,2R)-1-C-(indol-3-yl)glycerol 3-phosphate + L-serine = D-glyceraldehyde 3-phosphate + L-tryptophan + H2O. It participates in amino-acid biosynthesis; L-tryptophan biosynthesis; L-tryptophan from chorismate: step 5/5. Its function is as follows. The alpha subunit is responsible for the aldol cleavage of indoleglycerol phosphate to indole and glyceraldehyde 3-phosphate. This Geobacter sulfurreducens (strain ATCC 51573 / DSM 12127 / PCA) protein is Tryptophan synthase alpha chain.